We begin with the raw amino-acid sequence, 93 residues long: Parbolysin P5 (93 aa).

3 disulfide bridges follow: cysteine 16–cysteine 37, cysteine 22–cysteine 33, and cysteine 47–cysteine 60.

Belongs to the worm cytolysin family. Localized within the skin and proboscis and are most readily isolated from body mucus secretions.

The protein localises to the secreted. In terms of biological role, cytolysin that shows hemolytic activity (on bovine erythrocytes, HC(50)=5.75 mg/ml). This hemolytic activity is completely inhibited by small unilamelar vesicles composed of PC/PG, PC/PI and PC/PS in 1:1 molar ratios (with at least 100 mg/ml concentration). This is Parbolysin P5 from Parborlasia corrugatus (Antarctic nemertean worm).